A 49-amino-acid polypeptide reads, in one-letter code: Feruloyl esterase A (49 aa).

It belongs to the AB hydrolase superfamily. FaeA family.

The protein localises to the secreted. The enzyme catalyses feruloyl-polysaccharide + H2O = ferulate + polysaccharide.. Its function is as follows. Involved in degradation of plant cell walls. Hydrolyzes the feruloyl-arabinose ester bond in arabinoxylans as well as the feruloyl-galactose and feruloyl-arabinose ester bonds in pectin. Active against methyl esters of sinapate (MSA), but not caffeate (MCA). In Talaromyces stipitatus (strain ATCC 10500 / CBS 375.48 / QM 6759 / NRRL 1006) (Penicillium stipitatum), this protein is Feruloyl esterase A.